A 218-amino-acid chain; its full sequence is Large ribosomal subunit protein uL3 (218 aa).

It belongs to the universal ribosomal protein uL3 family. In terms of assembly, part of the 50S ribosomal subunit. Forms a cluster with proteins L14 and L19.

Its function is as follows. One of the primary rRNA binding proteins, it binds directly near the 3'-end of the 23S rRNA, where it nucleates assembly of the 50S subunit. The chain is Large ribosomal subunit protein uL3 from Syntrophus aciditrophicus (strain SB).